The following is a 209-amino-acid chain: MERKVFSKDGKEIGTINLDDRVFNIEISHGSIYNAIKNELSNLRVGTSSTKTRSEVRGSSKKPWKQKGTGRARVGTKRNPVWIGGGIALGPKPRDYSYRLPKKVKKLAFKSVLSLRAADENSFKVIENFNVESGKTKDLALIIKNFASFNGKVVILLGNDDQMIKRAGKNIRDLKILSFDKLRVVDLFYAKNLIALESAVNKLNEFYIK.

The segment at 46 to 72 is disordered; the sequence is GTSSTKTRSEVRGSSKKPWKQKGTGRA. The span at 59–72 shows a compositional bias: basic residues; it reads SSKKPWKQKGTGRA.

Belongs to the universal ribosomal protein uL4 family. In terms of assembly, part of the 50S ribosomal subunit.

Functionally, one of the primary rRNA binding proteins, this protein initially binds near the 5'-end of the 23S rRNA. It is important during the early stages of 50S assembly. It makes multiple contacts with different domains of the 23S rRNA in the assembled 50S subunit and ribosome. Its function is as follows. Forms part of the polypeptide exit tunnel. This Borreliella burgdorferi (strain ATCC 35210 / DSM 4680 / CIP 102532 / B31) (Borrelia burgdorferi) protein is Large ribosomal subunit protein uL4.